A 376-amino-acid chain; its full sequence is Protein-tyrosine sulfotransferase 2 (376 aa).

Over 1–8 (MRLSVRKV) the chain is Cytoplasmic. The helical; Signal-anchor for type II membrane protein transmembrane segment at 9-25 (LLAVGCALALVLAVQLG) threads the bilayer. At 26 to 376 (QQVLECRAVL…NSTSPHLGSS (351 aa)) the chain is on the lumenal side. Position 77 to 81 (77 to 81 (RSGTT)) interacts with 3'-phosphoadenylyl sulfate. A disulfide bridge links cysteine 95 with cysteine 155. The Proton donor/acceptor role is filled by glutamate 98. The tract at residues 100–104 (RIIPR) is interaction with peptide substrate. Residues arginine 182, serine 190, and arginine 194 each coordinate 3'-phosphoadenylyl sulfate. Cysteine 224 and cysteine 232 are joined by a disulfide. 3'-phosphoadenylyl sulfate is bound by residues tyrosine 237, 284 to 293 (STDQVIKPVN), and lysine 299. N-linked (GlcNAc...) asparagine glycosylation is found at asparagine 342 and asparagine 367.

This sequence belongs to the protein sulfotransferase family. As to quaternary structure, homodimer. Can also form heterodimers with TPST1. In terms of processing, N-glycosylated.

It localises to the golgi apparatus membrane. The catalysed reaction is L-tyrosyl-[protein] + 3'-phosphoadenylyl sulfate = O-sulfo-L-tyrosine-[protein] + adenosine 3',5'-bisphosphate + H(+). Catalyzes the O-sulfation of tyrosine residues within acidic motifs of polypeptides, using 3'-phosphoadenylyl sulfate (PAPS) as cosubstrate. The sequence is that of Protein-tyrosine sulfotransferase 2 (Tpst2) from Rattus norvegicus (Rat).